The chain runs to 98 residues: DNA-binding protein Fis (98 aa).

Residues 74–93 (QTRAALMMGINRGTLRKKLK) constitute a DNA-binding region (H-T-H motif).

The protein belongs to the transcriptional regulatory Fis family. Homodimer.

Its function is as follows. Activates ribosomal RNA transcription. Plays a direct role in upstream activation of rRNA promoters. The chain is DNA-binding protein Fis from Photorhabdus laumondii subsp. laumondii (strain DSM 15139 / CIP 105565 / TT01) (Photorhabdus luminescens subsp. laumondii).